The sequence spans 147 residues: 3-dehydroquinate dehydratase 2 (147 aa).

The Proton acceptor role is filled by tyrosine 23. Substrate-binding residues include asparagine 74, histidine 80, and aspartate 87. Histidine 100 (proton donor) is an active-site residue. Residues 101-102 and arginine 111 contribute to the substrate site; that span reads IS.

This sequence belongs to the type-II 3-dehydroquinase family. As to quaternary structure, homododecamer.

It carries out the reaction 3-dehydroquinate = 3-dehydroshikimate + H2O. It participates in metabolic intermediate biosynthesis; chorismate biosynthesis; chorismate from D-erythrose 4-phosphate and phosphoenolpyruvate: step 3/7. Functionally, catalyzes a trans-dehydration via an enolate intermediate. The sequence is that of 3-dehydroquinate dehydratase 2 (aroQ2) from Agrobacterium fabrum (strain C58 / ATCC 33970) (Agrobacterium tumefaciens (strain C58)).